We begin with the raw amino-acid sequence, 394 residues long: Elongation factor Tu 1 (394 aa).

The tr-type G domain occupies 10–204 (KPHVNVGTIG…ALDSYIPEPE (195 aa)). Residues 19 to 26 (GHVDHGKT) form a G1 region. Residue 19–26 (GHVDHGKT) participates in GTP binding. Thr-26 contacts Mg(2+). The interval 60–64 (GITIN) is G2. Residues 81–84 (DCPG) are G3. GTP-binding positions include 81–85 (DCPGH) and 136–139 (NKCD). The tract at residues 136 to 139 (NKCD) is G4. The G5 stretch occupies residues 174-176 (SAL).

This sequence belongs to the TRAFAC class translation factor GTPase superfamily. Classic translation factor GTPase family. EF-Tu/EF-1A subfamily. As to quaternary structure, monomer.

It is found in the cytoplasm. It catalyses the reaction GTP + H2O = GDP + phosphate + H(+). GTP hydrolase that promotes the GTP-dependent binding of aminoacyl-tRNA to the A-site of ribosomes during protein biosynthesis. This is Elongation factor Tu 1 from Shewanella oneidensis (strain ATCC 700550 / JCM 31522 / CIP 106686 / LMG 19005 / NCIMB 14063 / MR-1).